The chain runs to 89 residues: Ubiquinol-cytochrome-c reductase complex assembly factor 3 (89 aa).

At 1-7 (MEAARKA) the chain is on the mitochondrial matrix side. A helical transmembrane segment spans residues 8-28 (LAVVAVLGAGGGVGSILFALV). The tract at residues 23-80 (ILFALVTPGELQKQLMLQEMPERDSRRRDEAVRTKELVMATLKDAAATKENVAWRRNW) is mediates lipid-binding. Residues 29 to 89 (TPGELQKQLM…WTVRGDGRSA (61 aa)) are Mitochondrial intermembrane-facing.

The protein belongs to the UQCC3 family. Associates with the ubiquinol-cytochrome c reductase complex (mitochondrial respiratory chain complex III(CIII) or cytochrome b-c1 complex). Interacts with UQCC1. Forms a complex, named COMC, composed of UQCC1, UQCC2; UQCC3 and UQCC4; mediates MT-CYB hemylation and association with the first nuclear-encoded complex III subunit UQCRQ. Probably cleaved by OMA1 under mitochondrial stress conditions.

The protein localises to the mitochondrion inner membrane. Functionally, required for the assembly of the ubiquinol-cytochrome c reductase complex (mitochondrial respiratory chain complex III or cytochrome b-c1 complex), mediating cytochrome b recruitment and probably stabilization within the complex. Thereby, plays an important role in ATP production by mitochondria. Cardiolipin-binding protein, it may also control the cardiolipin composition of mitochondria membranes and their morphology. The sequence is that of Ubiquinol-cytochrome-c reductase complex assembly factor 3 from Rattus norvegicus (Rat).